The primary structure comprises 350 residues: Biotin synthase (350 aa).

Residues 1-13 (MVTQAATRPSNDA) show a composition bias toward polar residues. The interval 1–20 (MVTQAATRPSNDAGQDGVTE) is disordered. Residues 71–296 (PEVEVEGIIS…RTMLRFAGGR (226 aa)) form the Radical SAM core domain. [4Fe-4S] cluster is bound by residues C86, C90, and C93. Residues C129, C162, C221, and R291 each contribute to the [2Fe-2S] cluster site.

This sequence belongs to the radical SAM superfamily. Biotin synthase family. As to quaternary structure, homodimer. [4Fe-4S] cluster serves as cofactor. [2Fe-2S] cluster is required as a cofactor.

The enzyme catalyses (4R,5S)-dethiobiotin + (sulfur carrier)-SH + 2 reduced [2Fe-2S]-[ferredoxin] + 2 S-adenosyl-L-methionine = (sulfur carrier)-H + biotin + 2 5'-deoxyadenosine + 2 L-methionine + 2 oxidized [2Fe-2S]-[ferredoxin]. The protein operates within cofactor biosynthesis; biotin biosynthesis; biotin from 7,8-diaminononanoate: step 2/2. Its function is as follows. Catalyzes the conversion of dethiobiotin (DTB) to biotin by the insertion of a sulfur atom into dethiobiotin via a radical-based mechanism. This Mycobacterium ulcerans (strain Agy99) protein is Biotin synthase.